The chain runs to 108 residues: ATP-dependent Clp protease adapter protein ClpS (108 aa).

It belongs to the ClpS family. In terms of assembly, binds to the N-terminal domain of the chaperone ClpA.

Involved in the modulation of the specificity of the ClpAP-mediated ATP-dependent protein degradation. This chain is ATP-dependent Clp protease adapter protein ClpS, found in Mycobacterium leprae (strain TN).